Reading from the N-terminus, the 291-residue chain is Protease HtpX homolog (291 aa).

Helical transmembrane passes span 11–31 and 34–54; these read INTF…GLLA and FLGM…ACVQ. His140 is a binding site for Zn(2+). Glu141 is a catalytic residue. His144 is a Zn(2+) binding site. The next 2 helical transmembrane spans lie at 155-175 and 186-206; these read IVFG…RALI and AFSF…AMLV. Glu215 provides a ligand contact to Zn(2+).

It belongs to the peptidase M48B family. Requires Zn(2+) as cofactor.

The protein resides in the cell membrane. This Tropheryma whipplei (strain Twist) (Whipple's bacillus) protein is Protease HtpX homolog.